A 126-amino-acid chain; its full sequence is Histone H2B type 1-J (126 aa).

The span at 1–12 (MPEPAKSAPAPK) shows a compositional bias: low complexity. The tract at residues 1–35 (MPEPAKSAPAPKKGSKKAVTKAQKKDGKKRKRSRK) is disordered. An N-acetylproline modification is found at P2. E3 bears the ADP-ribosyl glutamic acid mark. K6 bears the N6-(2-hydroxyisobutyryl)lysine; alternate mark. At K6 the chain carries N6-(beta-hydroxybutyryl)lysine; alternate. K6 bears the N6-acetyllysine; alternate mark. The residue at position 6 (K6) is an N6-butyryllysine; alternate. Position 6 is an N6-crotonyllysine; alternate (K6). Residue K6 is modified to N6-lactoyllysine; alternate. Residue K6 forms a Glycyl lysine isopeptide (Lys-Gly) (interchain with G-Cter in SUMO2); alternate linkage. S7 carries the ADP-ribosylserine modification. An N6-(beta-hydroxybutyryl)lysine; alternate modification is found at K12. Residues K12 and K13 each carry the N6-acetyllysine; alternate modification. N6-crotonyllysine; alternate is present on residues K12 and K13. K12 is modified (N6-lactoyllysine; alternate). N6-(2-hydroxyisobutyryl)lysine; alternate is present on K13. S15 is subject to Phosphoserine; by STK4/MST1. N6-acetyllysine; alternate occurs at positions 16, 17, 21, and 24. An N6-crotonyllysine; alternate mark is found at K16, K17, K21, and K24. An N6-lactoyllysine; alternate mark is found at K16, K17, K21, and K24. N6-(beta-hydroxybutyryl)lysine; alternate is present on residues K17 and K21. N6-glutaryllysine; alternate is present on K17. N6-(2-hydroxyisobutyryl)lysine; alternate is present on residues K21 and K24. Position 21 is an N6-butyryllysine; alternate (K21). K21 is covalently cross-linked (Glycyl lysine isopeptide (Lys-Gly) (interchain with G-Cter in SUMO2); alternate). At K25 the chain carries N6-(2-hydroxyisobutyryl)lysine. N6-(2-hydroxyisobutyryl)lysine; alternate is present on K35. An N6-(beta-hydroxybutyryl)lysine; alternate modification is found at K35. N6-crotonyllysine; alternate is present on K35. K35 bears the N6-glutaryllysine; alternate mark. K35 is subject to N6-succinyllysine; alternate. K35 is covalently cross-linked (Glycyl lysine isopeptide (Lys-Gly) (interchain with G-Cter in ubiquitin); alternate). Position 36 is a polyADP-ribosyl glutamic acid (E36). At S37 the chain carries Phosphoserine; by AMPK. An N6-(2-hydroxyisobutyryl)lysine; alternate mark is found at K44, K47, and K58. Position 44 is an N6-lactoyllysine; alternate (K44). N6-glutaryllysine; alternate occurs at positions 44 and 47. Position 47 is an N6-methyllysine; alternate (K47). At K58 the chain carries N6,N6-dimethyllysine; alternate. Position 80 is a dimethylated arginine (R80). K86 bears the N6-(2-hydroxyisobutyryl)lysine; alternate mark. The residue at position 86 (K86) is an N6-(beta-hydroxybutyryl)lysine; alternate. K86 is modified (N6-acetyllysine; alternate). K86 is subject to N6-lactoyllysine; alternate. K86 carries the N6,N6,N6-trimethyllysine; alternate modification. An omega-N-methylarginine mark is found at R87 and R93. Residue K109 is modified to N6-(2-hydroxyisobutyryl)lysine; alternate. K109 is modified (N6-lactoyllysine; alternate). K109 is subject to N6-glutaryllysine; alternate. At K109 the chain carries N6-methyllysine; alternate. A glycan (O-linked (GlcNAc) serine) is linked at S113. Residue T116 is modified to Phosphothreonine. 2 positions are modified to N6-(2-hydroxyisobutyryl)lysine; alternate: K117 and K121. K117 and K121 each carry N6-(beta-hydroxybutyryl)lysine; alternate. N6-lactoyllysine; alternate is present on residues K117 and K121. N6-glutaryllysine; alternate occurs at positions 117 and 121. 2 positions are modified to N6-succinyllysine; alternate: K117 and K121. K117 carries the N6-malonyllysine; alternate modification. N6-methylated lysine; alternate is present on K117. Residue K121 forms a Glycyl lysine isopeptide (Lys-Gly) (interchain with G-Cter in ubiquitin); alternate linkage.

Belongs to the histone H2B family. The nucleosome is a histone octamer containing two molecules each of H2A, H2B, H3 and H4 assembled in one H3-H4 heterotetramer and two H2A-H2B heterodimers. The octamer wraps approximately 147 bp of DNA. Heterodimer H2BC11 and H2AZ1 interacts with VPS72 (via N-terminal domain). Monoubiquitination at Lys-35 (H2BK34Ub) by the MSL1/MSL2 dimer is required for histone H3 'Lys-4' (H3K4me) and 'Lys-79' (H3K79me) methylation and transcription activation at specific gene loci, such as HOXA9 and MEIS1 loci. Similarly, monoubiquitination at Lys-121 (H2BK120Ub) by the RNF20/40 complex gives a specific tag for epigenetic transcriptional activation and is also prerequisite for histone H3 'Lys-4' and 'Lys-79' methylation. It also functions cooperatively with the FACT dimer to stimulate elongation by RNA polymerase II. H2BK120Ub also acts as a regulator of mRNA splicing: deubiquitination by USP49 is required for efficient cotranscriptional splicing of a large set of exons. Post-translationally, phosphorylation at Ser-37 (H2BS36ph) by AMPK in response to stress promotes transcription. Phosphorylated on Ser-15 (H2BS14ph) by STK4/MST1 during apoptosis; which facilitates apoptotic chromatin condensation. Also phosphorylated on Ser-15 in response to DNA double strand breaks (DSBs), and in correlation with somatic hypermutation and immunoglobulin class-switch recombination. In terms of processing, glcNAcylation at Ser-113 promotes monoubiquitination of Lys-121. It fluctuates in response to extracellular glucose, and associates with transcribed genes. ADP-ribosylated by PARP1 or PARP2 on Ser-7 (H2BS6ADPr) in response to DNA damage. H2BS6ADPr promotes recruitment of CHD1L. Mono-ADP-ribosylated on Glu-3 (H2BE2ADPr) by PARP3 in response to single-strand breaks. Poly ADP-ribosylation on Glu-36 (H2BE35ADPr) by PARP1 regulates adipogenesis: it inhibits phosphorylation at Ser-37 (H2BS36ph), thereby blocking expression of pro-adipogenetic genes. Post-translationally, crotonylation (Kcr) is specifically present in male germ cells and marks testis-specific genes in post-meiotic cells, including X-linked genes that escape sex chromosome inactivation in haploid cells. Crotonylation marks active promoters and enhancers and confers resistance to transcriptional repressors. It is also associated with post-meiotically activated genes on autosomes. In terms of processing, lactylated in macrophages by EP300/P300 by using lactoyl-CoA directly derived from endogenous or exogenous lactate, leading to stimulates gene transcription.

The protein localises to the nucleus. Its subcellular location is the chromosome. Its function is as follows. Core component of nucleosome. Nucleosomes wrap and compact DNA into chromatin, limiting DNA accessibility to the cellular machineries which require DNA as a template. Histones thereby play a central role in transcription regulation, DNA repair, DNA replication and chromosomal stability. DNA accessibility is regulated via a complex set of post-translational modifications of histones, also called histone code, and nucleosome remodeling. Functionally, has broad antibacterial activity. May contribute to the formation of the functional antimicrobial barrier of the colonic epithelium, and to the bactericidal activity of amniotic fluid. This Homo sapiens (Human) protein is Histone H2B type 1-J.